The primary structure comprises 1026 residues: Multidrug resistance protein MdtC (1026 aa).

Topologically, residues 1-6 are cytoplasmic; sequence MRFFAL. A helical membrane pass occupies residues 7–29; the sequence is FIYRPVATILIAAAITLCGILGF. The Periplasmic portion of the chain corresponds to 30–335; sequence RLLPVAPLPQ…TIRASLQEVE (306 aa). A helical membrane pass occupies residues 336–353; that stretch reads ETLAISVALVILVVFLFL. Residues 354 to 359 are Cytoplasmic-facing; the sequence is RSGRAT. The helical transmembrane segment at 360 to 379 threads the bilayer; sequence LIPAVAVPVSLIGTFAAMYL. The Periplasmic segment spans residues 380-388; it reads CGFSLNNLS. Residues 389–411 form a helical membrane-spanning segment; the sequence is LMALTIATGFVVDDAIVVLENIA. The Cytoplasmic portion of the chain corresponds to 412-430; it reads RHLEAGMKPLQAALQGTRE. A helical membrane pass occupies residues 431–453; that stretch reads VGFTVISMSLSLVAVFLPLLLMG. Residues 454 to 467 are Periplasmic-facing; sequence GLPGRLLREFAVTL. Residues 468–490 form a helical membrane-spanning segment; it reads SVAIGISLVVSLTLTPMMCGWML. The Cytoplasmic segment spans residues 491–852; sequence KSSKPRTQPR…QVFQQTMNSQ (362 aa). A helical membrane pass occupies residues 853–875; sequence LILIVAAIATVYIVLGILYESYV. Over 876-894 the chain is Periplasmic; sequence HPLTILSTLPSAGVGALLA. A helical transmembrane segment spans residues 895 to 917; the sequence is LELFNAPFSLIALIGIMLLIGIV. The Cytoplasmic portion of the chain corresponds to 918–947; that stretch reads KKNAIMMVDFALEAQRSGGLTPEQAIFQAC. Residues 948–970 form a helical membrane-spanning segment; it reads LLRFRPIMMTTLAALFGALPLVL. Topologically, residues 971 to 984 are periplasmic; that stretch reads SGGDGSELRQPLGI. A helical membrane pass occupies residues 985 to 1007; the sequence is TIVGGLVMSQLLTLYTTPVVYLF. The Cytoplasmic portion of the chain corresponds to 1008–1026; that stretch reads FDRLRLRFSRKNSKPVVEI.

The protein belongs to the resistance-nodulation-cell division (RND) (TC 2.A.6) family. MdtC subfamily. Part of a tripartite efflux system composed of MdtA, MdtB and MdtC. MdtC forms a heteromultimer with MdtB.

Its subcellular location is the cell inner membrane. This Salmonella typhimurium (strain LT2 / SGSC1412 / ATCC 700720) protein is Multidrug resistance protein MdtC.